The sequence spans 325 residues: Thiamine-monophosphate kinase (325 aa).

2 residues coordinate Mg(2+): aspartate 27 and aspartate 44. Histidine 51 contacts substrate. Position 73 (aspartate 73) interacts with Mg(2+). ATP contacts are provided by residues tyrosine 103, 120–121 (GD), and arginine 147. Aspartate 121 contributes to the Mg(2+) binding site. Aspartate 215 is a Mg(2+) binding site. Position 217 (serine 217) interacts with ATP. Aspartate 218 contributes to the Mg(2+) binding site. The substrate site is built by glutamate 264 and tyrosine 321.

It belongs to the thiamine-monophosphate kinase family.

It catalyses the reaction thiamine phosphate + ATP = thiamine diphosphate + ADP. It participates in cofactor biosynthesis; thiamine diphosphate biosynthesis; thiamine diphosphate from thiamine phosphate: step 1/1. Functionally, catalyzes the ATP-dependent phosphorylation of thiamine-monophosphate (TMP) to form thiamine-pyrophosphate (TPP), the active form of vitamin B1. The sequence is that of Thiamine-monophosphate kinase from Bacillus subtilis (strain 168).